A 497-amino-acid chain; its full sequence is Inactive metallocarboxypeptidase ecm14 (497 aa).

The N-terminal stretch at 1–28 is a signal peptide; the sequence is MAYNKSLKSLVFILLASQIVFVLFLCYG. The propeptide occupies 29-148; sequence KSSRELGVKW…TLFESIVPDT (120 aa). A Peptidase M14 domain is found at 182-492; sequence SYQNLESINS…AMILYYGEFI (311 aa). The Zn(2+) site is built by histidine 248 and glutamate 251. Substrate is bound by residues 248-251 and 323-324; these read HARE and DA. Cysteine 317 and cysteine 337 are oxidised to a cystine. Histidine 377 is a Zn(2+) binding site. 378 to 379 serves as a coordination point for substrate; that stretch reads SY.

The protein belongs to the peptidase M14 family. Zn(2+) serves as cofactor.

The protein resides in the endoplasmic reticulum. It is found in the secreted. Inactive carboxypeptidase that may play a role in cell wall organization and biogenesis. The polypeptide is Inactive metallocarboxypeptidase ecm14 (Schizosaccharomyces pombe (strain 972 / ATCC 24843) (Fission yeast)).